Reading from the N-terminus, the 178-residue chain is CASP-like protein 5A1 (178 aa).

Low complexity predominate over residues 1 to 11; the sequence is MFASRPAVHPV. Residues 1-25 are disordered; the sequence is MFASRPAVHPVEAPPPPDPAEQPRG. Residues 1–37 are Cytoplasmic-facing; it reads MFASRPAVHPVEAPPPPDPAEQPRGVLMKDLPGMPGT. Residues 38 to 58 traverse the membrane as a helical segment; it reads AGGLGLRLAQFAFAAVALAVM. Topologically, residues 59–69 are extracellular; sequence ASTNDFPSVTS. A helical transmembrane segment spans residues 70–90; it reads FCFLVAAAILQCLWSFSLAIV. Residues 91-105 lie on the Cytoplasmic side of the membrane; it reads DIYALLVKRCLRNRR. The chain crosses the membrane as a helical span at residues 106–126; the sequence is AVCLFAIGDGITAALTFSAAC. Over 127 to 152 the chain is Extracellular; it reads ASSGITVLIDNDLDLCSENHCASFES. Residues 153-173 traverse the membrane as a helical segment; that stretch reads ATAMAFLSWFALSPSFLLNFW. At 174-178 the chain is on the cytoplasmic side; it reads SMASG.

This sequence belongs to the Casparian strip membrane proteins (CASP) family. As to quaternary structure, homodimer and heterodimers.

The protein resides in the cell membrane. This is CASP-like protein 5A1 from Oryza sativa subsp. japonica (Rice).